We begin with the raw amino-acid sequence, 289 residues long: HTH-type transcriptional regulator CatR (289 aa).

The 57-residue stretch at 1–57 folds into the HTH lysR-type domain; the sequence is MELRHLRYFKVLAETLNFTRAAELLHIAQPPLSRQISQLEDQLGTLLVVRERPLRLT. A DNA-binding region (H-T-H motif) is located at residues 18–37; sequence FTRAAELLHIAQPPLSRQIS.

It belongs to the LysR transcriptional regulatory family.

It localises to the cytoplasm. Functionally, positive regulator of the catBC operon that degrades catechol to acetyl-CoA. CatR binds in trans to the catR-catBC promoter-control region in the presence or absence of inducer but only activates the catBC operon in the presence of the inducer, cis-cis-muconate. This chain is HTH-type transcriptional regulator CatR (catR), found in Pseudomonas putida (Arthrobacter siderocapsulatus).